A 117-amino-acid polypeptide reads, in one-letter code: Immunoglobulin lambda variable 1-44 (117 aa).

The first 19 residues, 1–19 (MASFPLLLTLLTHCAGSWA), serve as a signal peptide directing secretion. Glutamine 20 carries the pyrrolidone carboxylic acid modification. Residues 20–44 (QSVLTQPPSASGTPGQRVTISCSGS) are framework-1. The region spanning 20–117 (QSVLTQPPSA…CAAWDDSLNG (98 aa)) is the Ig-like domain. Over residues 24 to 35 (TQPPSASGTPGQ) the composition is skewed to polar residues. The interval 24–45 (TQPPSASGTPGQRVTISCSGSS) is disordered. Cysteine 41 and cysteine 108 are disulfide-bonded. Residues 45–52 (SSNIGSNT) are complementarity-determining-1. Residues 53-69 (VNWYQQLPGTAPKLLIY) form a framework-2 region. Positions 70-72 (SNN) are complementarity-determining-2. The tract at residues 73–108 (QRPSGVPDRFSGSKSGTSASLAISGLQSEDEADYYC) is framework-3. The segment at 109 to 117 (AAWDDSLNG) is complementarity-determining-3.

As to quaternary structure, immunoglobulins are composed of two identical heavy chains and two identical light chains; disulfide-linked.

Its subcellular location is the secreted. It localises to the cell membrane. V region of the variable domain of immunoglobulin light chains that participates in the antigen recognition. Immunoglobulins, also known as antibodies, are membrane-bound or secreted glycoproteins produced by B lymphocytes. In the recognition phase of humoral immunity, the membrane-bound immunoglobulins serve as receptors which, upon binding of a specific antigen, trigger the clonal expansion and differentiation of B lymphocytes into immunoglobulins-secreting plasma cells. Secreted immunoglobulins mediate the effector phase of humoral immunity, which results in the elimination of bound antigens. The antigen binding site is formed by the variable domain of one heavy chain, together with that of its associated light chain. Thus, each immunoglobulin has two antigen binding sites with remarkable affinity for a particular antigen. The variable domains are assembled by a process called V-(D)-J rearrangement and can then be subjected to somatic hypermutations which, after exposure to antigen and selection, allow affinity maturation for a particular antigen. This Homo sapiens (Human) protein is Immunoglobulin lambda variable 1-44.